Reading from the N-terminus, the 778-residue chain is Serine/threonine-protein kinase BRSK1 (778 aa).

Over residues 1–12 the composition is skewed to gly residues; sequence MSSGSKEGGGGS. Positions 1-29 are disordered; the sequence is MSSGSKEGGGGSPAYHLPHPHPHPPQHAQ. A Protein kinase domain is found at 34–285; sequence YRLEKTLGKG…LEQIQKHPWY (252 aa). ATP contacts are provided by residues 40 to 48 and K63; that span reads LGKGQTGLV. D156 functions as the Proton acceptor in the catalytic mechanism. T189 is modified (phosphothreonine; by LKB1). Phosphoserine is present on S193. The UBA domain occupies 314–356; it reads ELDPDVLESMASLGCFRDRERLHRELRSEEENQEKMIYYLLLD. Residues 362–383 show a composition bias toward basic and acidic residues; that stretch reads PSCEDQDLPPRNDVDPPRKRVD. The disordered stretch occupies residues 362–548; the sequence is PSCEDQDLPP…SPGGGVGGAA (187 aa). 4 positions are modified to phosphoserine: S399, S443, S447, and S450. Positions 430-457 are enriched in low complexity; the sequence is SRSVSGASTGLSSSPLSSPRSPVFSFSP. An omega-N-methylarginine mark is found at R466, R481, R484, and R498. Over residues 491–508 the composition is skewed to pro residues; it reads QPPPPSARSTPLPGPPGS. S508 is modified (phosphoserine). Residues 509-533 show a composition bias toward low complexity; the sequence is PRSSGGTPLHSPLHTPRASPTGTPG. Residue R525 is modified to Omega-N-methylarginine. Phosphothreonine occurs at positions 529 and 535. Position 550 is an omega-N-methylarginine (R550). At T583 the chain carries Phosphothreonine. A phosphoserine mark is found at S586, S587, and S601. Positions 719 to 778 are disordered; it reads QPSVQALADEKNGAQTRPAGTPPRSLQPPPGRPDPDLSSSPRRGPSKDKKLLATNGTPLP.

This sequence belongs to the protein kinase superfamily. CAMK Ser/Thr protein kinase family. SNF1 subfamily. Mg(2+) is required as a cofactor. In terms of processing, phosphorylated at Thr-189 by STK11/LKB1 in complex with STE20-related adapter-alpha (STRADA) pseudo kinase and CAB39. Not phosphorylated at Thr-189 by CaMKK2. In contrast, it is phosphorylated and activated by CaMKK1. May be inactivated via dephosphorylation of Thr-189 by PP2C. May be autophosphorylated. In terms of tissue distribution, mainly present in brain. Present in presynaptic nerve terminals (at protein level).

It localises to the cytoplasm. The protein resides in the nucleus. It is found in the cytoskeleton. The protein localises to the microtubule organizing center. Its subcellular location is the centrosome. It localises to the synapse. The protein resides in the presynaptic active zone. It is found in the cytoplasmic vesicle. The protein localises to the secretory vesicle. Its subcellular location is the synaptic vesicle. It catalyses the reaction L-seryl-[protein] + ATP = O-phospho-L-seryl-[protein] + ADP + H(+). The catalysed reaction is L-threonyl-[protein] + ATP = O-phospho-L-threonyl-[protein] + ADP + H(+). The enzyme catalyses L-seryl-[tau protein] + ATP = O-phospho-L-seryl-[tau protein] + ADP + H(+). It carries out the reaction L-threonyl-[tau protein] + ATP = O-phospho-L-threonyl-[tau protein] + ADP + H(+). With respect to regulation, activated by phosphorylation on Thr-189 by STK11/LKB1. In terms of biological role, serine/threonine-protein kinase that plays a key role in polarization of neurons and centrosome duplication. Phosphorylates CDC25B, CDC25C, MAPT/TAU, RIMS1, TUBG1, TUBG2 and WEE1. Following phosphorylation and activation by STK11/LKB1, acts as a key regulator of polarization of cortical neurons, probably by mediating phosphorylation of microtubule-associated proteins such as MAPT/TAU at 'Thr-523' and 'Ser-573'. Also regulates neuron polarization by mediating phosphorylation of WEE1 at 'Ser-642' in postmitotic neurons, leading to down-regulate WEE1 activity in polarized neurons. Also acts as a positive regulator of centrosome duplication by mediating phosphorylation of gamma-tubulin (TUBG1 and TUBG2) at 'Ser-131', leading to translocation of gamma-tubulin and its associated proteins to the centrosome. Involved in the UV-induced DNA damage checkpoint response, probably by inhibiting CDK1 activity through phosphorylation and activation of WEE1, and inhibition of CDC25B and CDC25C. In neurons, localizes to synaptic vesicles and plays a role in neurotransmitter release, possibly by phosphorylating RIMS1. The polypeptide is Serine/threonine-protein kinase BRSK1 (Brsk1) (Rattus norvegicus (Rat)).